A 542-amino-acid chain; its full sequence is Phosphoenolpyruvate carboxykinase (ATP) (542 aa).

Arg-67, Tyr-208, and Lys-214 together coordinate substrate. ATP contacts are provided by residues Lys-214, His-233, and 249–257; that span reads GLSGTGKTT. Residues Lys-214 and His-233 each coordinate Mn(2+). Mn(2+) is bound at residue Asp-270. Residues Glu-298, Arg-334, 450-451, and Thr-456 contribute to the ATP site; that span reads RI. Residue Arg-334 coordinates substrate.

The protein belongs to the phosphoenolpyruvate carboxykinase (ATP) family. Monomer. Mn(2+) serves as cofactor.

The protein localises to the cytoplasm. It carries out the reaction oxaloacetate + ATP = phosphoenolpyruvate + ADP + CO2. The protein operates within carbohydrate biosynthesis; gluconeogenesis. In terms of biological role, involved in the gluconeogenesis. Catalyzes the conversion of oxaloacetate (OAA) to phosphoenolpyruvate (PEP) through direct phosphoryl transfer between the nucleoside triphosphate and OAA. In Vibrio campbellii (strain ATCC BAA-1116), this protein is Phosphoenolpyruvate carboxykinase (ATP).